The following is a 399-amino-acid chain: Dual-specificity RNA methyltransferase RlmN (399 aa).

The active-site Proton acceptor is Glu-116. The Radical SAM core domain maps to 122–352 (SEDRLTLCIS…VLLRRSMGRD (231 aa)). An intrachain disulfide couples Cys-129 to Cys-357. [4Fe-4S] cluster contacts are provided by Cys-136, Cys-140, and Cys-143. S-adenosyl-L-methionine contacts are provided by residues 185 to 186 (GE), Ser-217, 238 to 240 (SLN), and Asn-314. Residue Cys-357 is the S-methylcysteine intermediate of the active site.

It belongs to the radical SAM superfamily. RlmN family. It depends on [4Fe-4S] cluster as a cofactor.

It is found in the cytoplasm. It carries out the reaction adenosine(2503) in 23S rRNA + 2 reduced [2Fe-2S]-[ferredoxin] + 2 S-adenosyl-L-methionine = 2-methyladenosine(2503) in 23S rRNA + 5'-deoxyadenosine + L-methionine + 2 oxidized [2Fe-2S]-[ferredoxin] + S-adenosyl-L-homocysteine. The catalysed reaction is adenosine(37) in tRNA + 2 reduced [2Fe-2S]-[ferredoxin] + 2 S-adenosyl-L-methionine = 2-methyladenosine(37) in tRNA + 5'-deoxyadenosine + L-methionine + 2 oxidized [2Fe-2S]-[ferredoxin] + S-adenosyl-L-homocysteine. In terms of biological role, specifically methylates position 2 of adenine 2503 in 23S rRNA and position 2 of adenine 37 in tRNAs. m2A2503 modification seems to play a crucial role in the proofreading step occurring at the peptidyl transferase center and thus would serve to optimize ribosomal fidelity. This is Dual-specificity RNA methyltransferase RlmN from Bdellovibrio bacteriovorus (strain ATCC 15356 / DSM 50701 / NCIMB 9529 / HD100).